The sequence spans 602 residues: Aspartate--tRNA(Asp/Asn) ligase (602 aa).

E175 is an L-aspartate binding site. The segment at 199–202 is aspartate; sequence QIFK. R221 contacts L-aspartate. Residues 221-223 and Q230 each bind ATP; that span reads RDE. H458 lines the L-aspartate pocket. Position 492 (E492) interacts with ATP. Position 499 (R499) interacts with L-aspartate. 544-547 provides a ligand contact to ATP; sequence GLDR.

It belongs to the class-II aminoacyl-tRNA synthetase family. Type 1 subfamily. Homodimer.

The protein localises to the cytoplasm. The catalysed reaction is tRNA(Asx) + L-aspartate + ATP = L-aspartyl-tRNA(Asx) + AMP + diphosphate. Functionally, aspartyl-tRNA synthetase with relaxed tRNA specificity since it is able to aspartylate not only its cognate tRNA(Asp) but also tRNA(Asn). Reaction proceeds in two steps: L-aspartate is first activated by ATP to form Asp-AMP and then transferred to the acceptor end of tRNA(Asp/Asn). The protein is Aspartate--tRNA(Asp/Asn) ligase of Cupriavidus metallidurans (strain ATCC 43123 / DSM 2839 / NBRC 102507 / CH34) (Ralstonia metallidurans).